We begin with the raw amino-acid sequence, 224 residues long: uncharacterized protein (224 aa).

An N-terminal signal peptide occupies residues 1–16 (MKILYSFLLLPFFSCA).

This is an uncharacterized protein from Escherichia coli.